We begin with the raw amino-acid sequence, 138 residues long: RutC family protein UK114 (138 aa).

The protein belongs to the RutC family.

Molecular chaperone. Seems to fulfill an ATP-independent, HSP70-like function in protein folding. May protect essential factors of cell proliferation during heat shock. No role in calpain activation. In Drosophila melanogaster (Fruit fly), this protein is RutC family protein UK114.